A 353-amino-acid chain; its full sequence is 2-oxoglutarate-dependent dioxygenase phqC (353 aa).

Residues 199-315 (CASELRLNNY…RRSCAFFLKA (117 aa)) enclose the Fe2OG dioxygenase domain. Fe cation is bound by residues histidine 227, aspartate 229, and histidine 287. A 2-oxoglutarate-binding site is contributed by arginine 302.

It belongs to the iron/ascorbate-dependent oxidoreductase family. It depends on Fe(2+) as a cofactor.

It participates in alkaloid biosynthesis. In terms of biological role, 2-oxoglutarate-dependent dioxygenase; part of the gene cluster that mediates the biosynthesis of paraherquamide, a fungal indole alkaloid that belongs to a family of natural products containing a characteristic bicyclo[2.2.2]diazaoctane core. The first steps in the biosynthesis of paraherquamide is the production of the beta-methyl-proline precursor from L-isoleucine. They require oxidation of a terminally hydroxylated L-isoleucine to the corresponding aldehyde by enzymes which have still to be identified. Spontaneous cyclization and dehydration would yield the 4-methyl pyrolline-5-carboxylic acid, which is then reduced by the pyrroline-5-carboxylate reductase phqD leading to the beta-methyl-proline precursor. The next step of paraherquamide biosynthesis involves coupling of beta-methyl-proline and L-tryptophan by the bimodular NRPS phqB, to produce a monooxopiperazine intermediate. The reductase (R) domain of phqB utilizes NADPH for hydride transfer to reduce the thioester bond of the T domain-tethered linear dipeptide to a hemithioaminal intermediate, which spontaneously cleaves the C-S bond to release the aldehyde product. This compound undergoes spontaneous cyclization and dehydration to give a dienamine which is reverse prenylated at C-2 by the reverse prenyltransferase phqJ. The other prenyltransferase present in the cluster, phqI may be a redundant gene in the pathway. During biosynthetic assembly, the key step to produce the polycyclic core is catalyzed by the bifunctional reductase and intramolecular [4+2] Diels-Alderase, phqE, resulting in formation of the [2.2.2] diazaoctane intermediate preparaherquamide. Following formation of preparaherquamide, an indole 2,3-epoxidation-initiated pinacol-like rearrangement is catalyzed by the phqK FAD-dependent monooxygenase. The prenyltransferase phqA, the cytochrome P450 monooxygenase phqL, and the FAD-linked oxidoreductase phqH (or the cytochrome P450 monooxygenase phqM), are proposed to be involved in the formation of the pyran ring. The FAD-dependent monooxygenase phqK is likely responsible for generation of the spiro-oxindole, and the N-methylation is likely mediated by the phqN methyltransferase leading to the isolable natural product paraherquamide F. However, the order of these biosynthetic steps has still to be determined. In late-stage paraherquamide biosynthesis, the third P450 monooxygenase, phqO, is probably responsible for the C-14 hydroxylation, transforming paraherquamide F to paraherquamide G, and paraherquamide E to the final product paraherquamide A. The expansion from the 6-membered ring pyran (in paraherquamides F and G) to the 7-membered dioxepin ring (in paraherquamides A and E) represents a poorly understood but intriguing process that probably involves the 2-oxoglutarate-dependent dioxygenase phqC. Finally, the remaining members of the paraherquamide cluster, including phqI as well as phqM (or phqH), do not have a clearly prescribed role and appear to be redundant. The sequence is that of 2-oxoglutarate-dependent dioxygenase phqC from Penicillium fellutanum.